Consider the following 234-residue polypeptide: Triosephosphate isomerase (234 aa).

Asparagine 8–lysine 10 provides a ligand contact to substrate. The active-site Electrophile is histidine 90. Glutamate 159 acts as the Proton acceptor in catalysis. Residues glycine 165 and serine 197 each contribute to the substrate site.

This sequence belongs to the triosephosphate isomerase family. In terms of assembly, homodimer.

It is found in the cytoplasm. The catalysed reaction is D-glyceraldehyde 3-phosphate = dihydroxyacetone phosphate. It participates in carbohydrate biosynthesis; gluconeogenesis. The protein operates within carbohydrate degradation; glycolysis; D-glyceraldehyde 3-phosphate from glycerone phosphate: step 1/1. Its function is as follows. Involved in the gluconeogenesis. Catalyzes stereospecifically the conversion of dihydroxyacetone phosphate (DHAP) to D-glyceraldehyde-3-phosphate (G3P). The polypeptide is Triosephosphate isomerase (Helicobacter pylori (strain G27)).